A 192-amino-acid chain; its full sequence is INO80 complex subunit C (192 aa).

Residues Met-1 to Lys-44 form a disordered region.

In terms of assembly, component of the chromatin remodeling INO80 complex; specifically part of a complex module associated with the helicase ATP-binding and the helicase C-terminal domain of INO80. Component of some MLL1/MLL complex, at least composed of the core components KMT2A/MLL1, ASH2L, HCFC1/HCF1, WDR5 and RBBP5, as well as the facultative components BACC1, CHD8, E2F6, HSP70, INO80C, KANSL1, LAS1L, MAX, MCRS1, MGA, MYST1/MOF, PELP1, PHF20, PRP31, RING2, RUVB1/TIP49A, RUVB2/TIP49B, SENP3, TAF1, TAF4, TAF6, TAF7, TAF9 and TEX10.

It localises to the nucleus. In terms of biological role, proposed core component of the chromatin remodeling INO80 complex which is involved in transcriptional regulation, DNA replication and probably DNA repair. This chain is INO80 complex subunit C (INO80C), found in Homo sapiens (Human).